We begin with the raw amino-acid sequence, 465 residues long: Ribulose bisphosphate carboxylase large chain (465 aa).

At K4 the chain carries N6,N6,N6-trimethyllysine. Substrate-binding residues include N113 and T163. K165 serves as the catalytic Proton acceptor. K167 contacts substrate. 3 residues coordinate Mg(2+): K191, D193, and E194. An N6-carboxylysine modification is found at K191. The Proton acceptor role is filled by H284. Positions 285, 317, and 369 each coordinate substrate.

The protein belongs to the RuBisCO large chain family. Type I subfamily. Heterohexadecamer of 8 large chains and 8 small chains. Mg(2+) serves as cofactor.

It localises to the plastid. Its subcellular location is the chloroplast. The enzyme catalyses 2 (2R)-3-phosphoglycerate + 2 H(+) = D-ribulose 1,5-bisphosphate + CO2 + H2O. The catalysed reaction is D-ribulose 1,5-bisphosphate + O2 = 2-phosphoglycolate + (2R)-3-phosphoglycerate + 2 H(+). RuBisCO catalyzes two reactions: the carboxylation of D-ribulose 1,5-bisphosphate, the primary event in carbon dioxide fixation, as well as the oxidative fragmentation of the pentose substrate in the photorespiration process. Both reactions occur simultaneously and in competition at the same active site. The chain is Ribulose bisphosphate carboxylase large chain from Sarracenia flava (Yellow pitcher plant).